Consider the following 311-residue polypeptide: Immune-associated nucleotide-binding protein 7 (311 aa).

The region spanning 14–222 (KQAENIVLVG…YTDDTYHMIK (209 aa)) is the AIG1-type G domain. The segment at 23-30 (GRTGNGKS) is G1. Residues 23–31 (GRTGNGKSA) and Ser-44 each bind GTP. A G2 region spans residues 50–54 (GVTMK). The tract at residues 72–75 (DTPG) is G3. A G4 region spans residues 142–145 (TGGD). A G5 region spans residues 181–183 (DNK). A GTP-binding site is contributed by Asn-182. Positions 218-295 (YHMIKEESEK…TQENNELNLA (78 aa)) form a coiled coil.

This sequence belongs to the TRAFAC class TrmE-Era-EngA-EngB-Septin-like GTPase superfamily. AIG1/Toc34/Toc159-like paraseptin GTPase family. IAN subfamily. As to expression, ubiquitous.

This chain is Immune-associated nucleotide-binding protein 7, found in Arabidopsis thaliana (Mouse-ear cress).